A 455-amino-acid polypeptide reads, in one-letter code: F-box/LRR-repeat protein At5g35995 (455 aa).

An F-box domain is found at 4 to 51 (RDFISSLPDEVLGKKILSLLPTKLVVSTSVLSKRWRNLFHFVDSFDLE). 5 LRR repeats span residues 114-138 (DHYL…SYRT), 152-176 (FPAL…LISG), 282-305 (IRNV…CYTM), 308-324 (FDKL…ENGW), and 325-348 (QALP…LLHK).

This is F-box/LRR-repeat protein At5g35995 from Arabidopsis thaliana (Mouse-ear cress).